Here is a 324-residue protein sequence, read N- to C-terminus: 3-hydroxyisobutyrate dehydrogenase, mitochondrial (324 aa).

Residues 1 to 25 (MSLRVMSPAMLNAWSQTLVRAMSTQ) constitute a mitochondrion transit peptide. NAD(+) is bound by residues 29–58 (KNIG…HVFD), 92–93 (LP), and Thr121. Lys196 is an active-site residue. Lys271 lines the NAD(+) pocket.

The protein belongs to the HIBADH-related family. 3-hydroxyisobutyrate dehydrogenase subfamily.

It localises to the mitochondrion. The enzyme catalyses 3-hydroxy-2-methylpropanoate + NAD(+) = 2-methyl-3-oxopropanoate + NADH + H(+). It functions in the pathway amino-acid degradation; L-valine degradation. This Drosophila melanogaster (Fruit fly) protein is 3-hydroxyisobutyrate dehydrogenase, mitochondrial.